A 100-amino-acid chain; its full sequence is RxLR effector protein PITG_18683 (100 aa).

The N-terminal stretch at 1–22 is a signal peptide; it reads MRSFLYGILAFAVLARSSAVAA. Residues 43-57 carry the RxLR-dEER motif; sequence RSLRVEAQEVIQSGR. The short motif at 78–82 is the Calmodulin-binding motif element; the sequence is KPDIK.

The protein belongs to the RxLR effector family. In terms of assembly, interacts with the host calmodulin.

It localises to the secreted. The protein localises to the host cell. Its function is as follows. Secreted effector that associates with calmodulin to interfere with plant defense-associated calcium signaling in hosts. This chain is RxLR effector protein PITG_18683, found in Phytophthora infestans (strain T30-4) (Potato late blight agent).